A 546-amino-acid chain; its full sequence is Chaperonin GroEL (546 aa).

ATP is bound by residues 29–32 (TMGP), lysine 50, 86–90 (DGTTT), glycine 414, and aspartate 492.

The protein belongs to the chaperonin (HSP60) family. Forms a cylinder of 14 subunits composed of two heptameric rings stacked back-to-back. Interacts with the co-chaperonin GroES.

Its subcellular location is the cytoplasm. The catalysed reaction is ATP + H2O + a folded polypeptide = ADP + phosphate + an unfolded polypeptide.. Functionally, together with its co-chaperonin GroES, plays an essential role in assisting protein folding. The GroEL-GroES system forms a nano-cage that allows encapsulation of the non-native substrate proteins and provides a physical environment optimized to promote and accelerate protein folding. In Helicobacter pylori (strain J99 / ATCC 700824) (Campylobacter pylori J99), this protein is Chaperonin GroEL.